We begin with the raw amino-acid sequence, 213 residues long: MTSVFEERVESLKELGARIEAALPTDVVRVEMAKDELQVIAQRPSIAKVLTFLRDDSACRFSQLVDIAGVDYPSREERFEVVYNMLSMHHNQRIRVKISASEDTPVPSVTRVFSSANWFEREAWDMYGIFFSEHPDLRRLLSDYGFEGHAQRKDFPLTGYKEVRYDEELKRVVYEPVRLSQDFRTFDFLSPWEGMDRQIRRVLPGDEKAEGNA.

Belongs to the complex I 30 kDa subunit family. NDH-1 is composed of 14 different subunits. Subunits NuoB, C, D, E, F, and G constitute the peripheral sector of the complex.

It localises to the cell inner membrane. It carries out the reaction a quinone + NADH + 5 H(+)(in) = a quinol + NAD(+) + 4 H(+)(out). Its function is as follows. NDH-1 shuttles electrons from NADH, via FMN and iron-sulfur (Fe-S) centers, to quinones in the respiratory chain. The immediate electron acceptor for the enzyme in this species is believed to be ubiquinone. Couples the redox reaction to proton translocation (for every two electrons transferred, four hydrogen ions are translocated across the cytoplasmic membrane), and thus conserves the redox energy in a proton gradient. In Rhodospirillum rubrum (strain ATCC 11170 / ATH 1.1.1 / DSM 467 / LMG 4362 / NCIMB 8255 / S1), this protein is NADH-quinone oxidoreductase subunit C.